The sequence spans 216 residues: Acyl-homoserine-lactone synthase (216 aa).

It belongs to the autoinducer synthase family.

The enzyme catalyses a fatty acyl-[ACP] + S-adenosyl-L-methionine = an N-acyl-L-homoserine lactone + S-methyl-5'-thioadenosine + holo-[ACP] + H(+). Its function is as follows. Required for the synthesis of an acyl-HSL autoinducer that binds to YukR and which is involved in the regulation of motility and morphology. The sequence is that of Acyl-homoserine-lactone synthase (yukI) from Yersinia ruckeri.